The sequence spans 324 residues: DNA repair and recombination protein RadA (324 aa).

ATP is bound at residue G114 to T121.

The protein belongs to the eukaryotic RecA-like protein family.

Its function is as follows. Involved in DNA repair and in homologous recombination. Binds and assemble on single-stranded DNA to form a nucleoprotein filament. Hydrolyzes ATP in a ssDNA-dependent manner and promotes DNA strand exchange between homologous DNA molecules. In Saccharolobus islandicus (strain Y.N.15.51 / Yellowstone #2) (Sulfolobus islandicus), this protein is DNA repair and recombination protein RadA.